Consider the following 101-residue polypeptide: Phosphoprotein OPG062 (101 aa).

The interval 48–76 (VDKPSSPASERRPSSPSRCERMNNPGKQV) is disordered. Phosphoserine occurs at positions 53 and 62. Over residues 56 to 68 (SERRPSSPSRCER) the composition is skewed to basic and acidic residues.

This sequence belongs to the orthopoxvirus OPG062 family. Self-associates to form high molecular-weight forms. Interacts with protein OPG157. Interacts with host RICTOR and RPTOR; these interactions disrupt the mTORC1 and mTORC2 crosstalk. Phosphorylated on two serines. While these phosphorylations do not play a role in virion assembly; they are essential for the interaction with host RICTOR and RPTOR.

The protein localises to the virion. In terms of biological role, plays an essential role in virion assembly and morphogenesis. Also plays a role in the inhibition of host immune response by dysregulating mTOR. Sequesters host RICTOR and RPTOR, thereby disrupting mTORC1 and mTORC2 crosstalk. In turn, blocks the host antiviral response in part through mTOR-dependent degradation of cGAS, the primary poxvirus sensor. In Variola virus (isolate Human/India/Ind3/1967) (VARV), this protein is Phosphoprotein OPG062 (OPG062).